The chain runs to 339 residues: Ketol-acid reductoisomerase (NADP(+)) (339 aa).

A KARI N-terminal Rossmann domain is found at 1 to 182 (MRVYYDRDAD…GGGRAGIIET (182 aa)). NADP(+) contacts are provided by residues 24–27 (YGSQ), Arg-48, Ser-51, Ser-53, and 83–86 (DELQ). His-108 is an active-site residue. An NADP(+)-binding site is contributed by Gly-134. The KARI C-terminal knotted domain occupies 183–328 (TFKEECETDL…ERLRGMMPWI (146 aa)). Mg(2+) contacts are provided by Asp-191, Glu-195, Glu-227, and Glu-231. Position 252 (Ser-252) interacts with substrate.

The protein belongs to the ketol-acid reductoisomerase family. Mg(2+) is required as a cofactor.

It catalyses the reaction (2R)-2,3-dihydroxy-3-methylbutanoate + NADP(+) = (2S)-2-acetolactate + NADPH + H(+). The enzyme catalyses (2R,3R)-2,3-dihydroxy-3-methylpentanoate + NADP(+) = (S)-2-ethyl-2-hydroxy-3-oxobutanoate + NADPH + H(+). It participates in amino-acid biosynthesis; L-isoleucine biosynthesis; L-isoleucine from 2-oxobutanoate: step 2/4. The protein operates within amino-acid biosynthesis; L-valine biosynthesis; L-valine from pyruvate: step 2/4. Functionally, involved in the biosynthesis of branched-chain amino acids (BCAA). Catalyzes an alkyl-migration followed by a ketol-acid reduction of (S)-2-acetolactate (S2AL) to yield (R)-2,3-dihydroxy-isovalerate. In the isomerase reaction, S2AL is rearranged via a Mg-dependent methyl migration to produce 3-hydroxy-3-methyl-2-ketobutyrate (HMKB). In the reductase reaction, this 2-ketoacid undergoes a metal-dependent reduction by NADPH to yield (R)-2,3-dihydroxy-isovalerate. In Methylobacterium sp. (strain 4-46), this protein is Ketol-acid reductoisomerase (NADP(+)).